We begin with the raw amino-acid sequence, 197 residues long: dITP/XTP pyrophosphatase (197 aa).

8–13 (TGNPGK) is a binding site for substrate. Residues glutamate 40 and aspartate 69 each contribute to the Mg(2+) site. The active-site Proton acceptor is aspartate 69. Residues serine 70, 154–157 (FGYD), lysine 177, and 182–183 (HR) each bind substrate.

The protein belongs to the HAM1 NTPase family. Homodimer. Mg(2+) serves as cofactor.

It catalyses the reaction XTP + H2O = XMP + diphosphate + H(+). The enzyme catalyses dITP + H2O = dIMP + diphosphate + H(+). It carries out the reaction ITP + H2O = IMP + diphosphate + H(+). In terms of biological role, pyrophosphatase that catalyzes the hydrolysis of nucleoside triphosphates to their monophosphate derivatives, with a high preference for the non-canonical purine nucleotides XTP (xanthosine triphosphate), dITP (deoxyinosine triphosphate) and ITP. Seems to function as a house-cleaning enzyme that removes non-canonical purine nucleotides from the nucleotide pool, thus preventing their incorporation into DNA/RNA and avoiding chromosomal lesions. The sequence is that of dITP/XTP pyrophosphatase from Yersinia pseudotuberculosis serotype I (strain IP32953).